A 740-amino-acid polypeptide reads, in one-letter code: Ion-translocating oxidoreductase complex subunit C (740 aa).

4Fe-4S ferredoxin-type domains follow at residues 369–397 (GEPQ…QQLY) and 407–436 (KATT…VQYF). [4Fe-4S] cluster-binding residues include cysteine 377, cysteine 380, cysteine 383, cysteine 387, cysteine 416, cysteine 419, cysteine 422, and cysteine 426. The tract at residues 602–716 (KLEQQQANAE…EPEEQVDPRK (115 aa)) is disordered.

The protein belongs to the 4Fe4S bacterial-type ferredoxin family. RnfC subfamily. In terms of assembly, the complex is composed of six subunits: RsxA, RsxB, RsxC, RsxD, RsxE and RsxG. The cofactor is [4Fe-4S] cluster.

The protein localises to the cell inner membrane. Part of a membrane-bound complex that couples electron transfer with translocation of ions across the membrane. Required to maintain the reduced state of SoxR. This is Ion-translocating oxidoreductase complex subunit C from Escherichia coli (strain SE11).